The primary structure comprises 71 residues: Conotoxin TxMMSK-05 (71 aa).

An N-terminal signal peptide occupies residues 1 to 20; that stretch reads MMSKLGALLIICLLLFPLTA. The propeptide occupies 21–52; that stretch reads VPLDGDQHADRPAERLQDDISSKHHPMFDAVR. Cystine bridges form between C54/C70, C55/C66, and C60/C69.

Belongs to the conotoxin M superfamily. Expressed by the venom duct.

It localises to the secreted. This Conus textile (Cloth-of-gold cone) protein is Conotoxin TxMMSK-05.